A 690-amino-acid chain; its full sequence is Polyribonucleotide nucleotidyltransferase (690 aa).

Residues Asp483 and Asp489 each coordinate Mg(2+). Residues 550 to 609 (PKMEQITVDKKDIAAVIGKGGATIREIVEKSGAKLDVNDEGVVTVAAPDEESRNIAMQMI) form the KH domain. Residues 619 to 686 (NKIYSGKVMK…DRGKVKLSMK (68 aa)) form the S1 motif domain.

Belongs to the polyribonucleotide nucleotidyltransferase family. Mg(2+) serves as cofactor.

The protein resides in the cytoplasm. It carries out the reaction RNA(n+1) + phosphate = RNA(n) + a ribonucleoside 5'-diphosphate. Functionally, involved in mRNA degradation. Catalyzes the phosphorolysis of single-stranded polyribonucleotides processively in the 3'- to 5'-direction. In Pelagibacter ubique (strain HTCC1062), this protein is Polyribonucleotide nucleotidyltransferase.